Here is a 410-residue protein sequence, read N- to C-terminus: F-box/WD-40 repeat-containing protein 1 (410 aa).

An F-box domain is found at 32–79 (SKECSLLPFELFEEILCRVPTKSLLRLKLTCKRWLALFNDKRFIYKHL). WD repeat units follow at residues 109–150 (PNKF…VRWI) and 269–309 (DVHN…NGVS).

This Arabidopsis thaliana (Mouse-ear cress) protein is F-box/WD-40 repeat-containing protein 1 (FBW1).